A 368-amino-acid polypeptide reads, in one-letter code: Heme A synthase (368 aa).

Helical transmembrane passes span 14–34 (AVRI…LVGG), 104–124 (VIGI…AIGP), 129–149 (ALWI…WMVA), 161–181 (VRLA…VWTL), and 200–220 (ALAL…VAGL). A heme-binding site is contributed by His264. 3 consecutive transmembrane segments (helical) span residues 266–283 (MLAY…IDAL), 296–316 (FLAL…AAPI), and 318–338 (LALV…LQAE). His322 provides a ligand contact to heme.

Belongs to the COX15/CtaA family. Type 2 subfamily. As to quaternary structure, interacts with CtaB. Heme b is required as a cofactor.

Its subcellular location is the cell membrane. The catalysed reaction is Fe(II)-heme o + 2 A + H2O = Fe(II)-heme a + 2 AH2. It functions in the pathway porphyrin-containing compound metabolism; heme A biosynthesis; heme A from heme O: step 1/1. Its function is as follows. Catalyzes the conversion of heme O to heme A by two successive hydroxylations of the methyl group at C8. The first hydroxylation forms heme I, the second hydroxylation results in an unstable dihydroxymethyl group, which spontaneously dehydrates, resulting in the formyl group of heme A. The polypeptide is Heme A synthase (Rhodopseudomonas palustris (strain ATCC BAA-98 / CGA009)).